The following is a 222-amino-acid chain: Phosphoglycolate phosphatase (222 aa).

The Nucleophile role is filled by aspartate 8. Mg(2+) is bound by residues aspartate 8 and aspartate 10. Lysine 146 provides a ligand contact to substrate. Residues aspartate 169 and aspartate 173 each contribute to the Mg(2+) site.

It belongs to the archaeal SPP-like hydrolase family. Requires Mg(2+) as cofactor.

It carries out the reaction 2-phosphoglycolate + H2O = glycolate + phosphate. Catalyzes the dephosphorylation of 2-phosphoglycolate. The polypeptide is Phosphoglycolate phosphatase (Methanothrix thermoacetophila (strain DSM 6194 / JCM 14653 / NBRC 101360 / PT) (Methanosaeta thermophila)).